The primary structure comprises 448 residues: T-box transcription factor TBX19 (448 aa).

Positions 45 to 218 (LEDAPLWQRF…YNPFAKAFLD (174 aa)) form a DNA-binding region, T-box.

The protein resides in the nucleus. Transcriptional regulator involved in developmental processes. Can activate POMC gene expression and repress the alpha glycoprotein subunit and thyroid-stimulating hormone beta promoters. This chain is T-box transcription factor TBX19, found in Homo sapiens (Human).